We begin with the raw amino-acid sequence, 405 residues long: L-rhamnonate dehydratase (405 aa).

Substrate-binding residues include H33 and R59. Mg(2+) contacts are provided by D226, E252, and E280. H329 functions as the Proton acceptor in the catalytic mechanism. Substrate is bound at residue E349.

Belongs to the mandelate racemase/muconate lactonizing enzyme family. RhamD subfamily. Homooctamer; tetramer of dimers. The cofactor is Mg(2+).

The enzyme catalyses L-rhamnonate = 2-dehydro-3-deoxy-L-rhamnonate + H2O. Catalyzes the dehydration of L-rhamnonate to 2-keto-3-deoxy-L-rhamnonate (KDR). The polypeptide is L-rhamnonate dehydratase (Escherichia coli O6:H1 (strain CFT073 / ATCC 700928 / UPEC)).